Consider the following 475-residue polypeptide: UDP-N-acetylmuramate--L-alanine ligase (475 aa).

118–124 provides a ligand contact to ATP; the sequence is GTHGKTT.

Belongs to the MurCDEF family.

It localises to the cytoplasm. It catalyses the reaction UDP-N-acetyl-alpha-D-muramate + L-alanine + ATP = UDP-N-acetyl-alpha-D-muramoyl-L-alanine + ADP + phosphate + H(+). The protein operates within cell wall biogenesis; peptidoglycan biosynthesis. Cell wall formation. The polypeptide is UDP-N-acetylmuramate--L-alanine ligase (Thermosynechococcus vestitus (strain NIES-2133 / IAM M-273 / BP-1)).